We begin with the raw amino-acid sequence, 150 residues long: Probable cyclase FGR4 (150 aa).

Its pathway is secondary metabolite biosynthesis. Its function is as follows. Probable cyclase; part of the gene cluster that mediates the biosynthesis of the tetraketides fugralins such as linear fugralin A and cyclic fugralin B, volatile compounds that play a role in the asexual reproductive cycle but are not involved in pathogenicity. Fugralin B is similar to fugralin A except for a cyclization between the carboxylic acid C-8 and the alcohol on C-4 resulting in a six membered lactone ring, probably catalyzed by the cyclase FGR4. One of the key features of fugralins is the presence of a double methyl group, which is only rarely encountered in fungal secondary metabolites. As the fugralins cluster does not contain an independent methyltransferase, the PKS FGR1 is probably responsible for adding two methyl groups to the same carbon atom. The exact role of the individual cluster genes remains unknown and further work is needed to unravel the biosynthetic pathway. This is Probable cyclase FGR4 from Gibberella zeae (strain ATCC MYA-4620 / CBS 123657 / FGSC 9075 / NRRL 31084 / PH-1) (Wheat head blight fungus).